The following is a 310-amino-acid chain: Methionyl-tRNA formyltransferase (310 aa).

Residue 111–114 coordinates (6S)-5,6,7,8-tetrahydrofolate; that stretch reads SLLP.

It belongs to the Fmt family.

The catalysed reaction is L-methionyl-tRNA(fMet) + (6R)-10-formyltetrahydrofolate = N-formyl-L-methionyl-tRNA(fMet) + (6S)-5,6,7,8-tetrahydrofolate + H(+). Attaches a formyl group to the free amino group of methionyl-tRNA(fMet). The formyl group appears to play a dual role in the initiator identity of N-formylmethionyl-tRNA by promoting its recognition by IF2 and preventing the misappropriation of this tRNA by the elongation apparatus. The sequence is that of Methionyl-tRNA formyltransferase from Afipia carboxidovorans (strain ATCC 49405 / DSM 1227 / KCTC 32145 / OM5) (Oligotropha carboxidovorans).